We begin with the raw amino-acid sequence, 973 residues long: Translation initiation factor IF-2 (973 aa).

The span at 97–135 (GHIDLDGGQHKKQQEEPKAKEEPKVKEEPKVKEEPKVKE) shows a compositional bias: basic and acidic residues. Disordered stretches follow at residues 97 to 343 (GHID…EDVQ) and 353 to 372 (LTNK…DKRD). A compositionally biased stretch (low complexity) spans 136–155 (APAAPAAQAPVKPAQPAQAP). Composition is skewed to basic and acidic residues over residues 156-175 (TEKK…KTVE), 183-204 (PKVE…DDNL), 212-224 (LESK…KIDL), and 237-250 (TKEE…EKQK). The span at 252-266 (NNNRPGNNSNGPGAP) shows a compositional bias: low complexity. Basic and acidic residues-rich tracts occupy residues 315 to 326 (PNRDDRPNNDRK) and 333 to 343 (VKAEVSEEDVQ). The region spanning 472 to 642 (ARPPIVTVMG…LLEADLLDLK (171 aa)) is the tr-type G domain. The tract at residues 481–488 (GHVDHGKT) is G1. Residue 481–488 (GHVDHGKT) participates in GTP binding. The tract at residues 506 to 510 (GITQH) is G2. Residues 528–531 (DTPG) are G3. GTP contacts are provided by residues 528 to 532 (DTPGH) and 582 to 585 (NKID). The segment at 582–585 (NKID) is G4. Residues 618-620 (SAK) form a G5 region.

It belongs to the TRAFAC class translation factor GTPase superfamily. Classic translation factor GTPase family. IF-2 subfamily.

Its subcellular location is the cytoplasm. One of the essential components for the initiation of protein synthesis. Protects formylmethionyl-tRNA from spontaneous hydrolysis and promotes its binding to the 30S ribosomal subunits. Also involved in the hydrolysis of GTP during the formation of the 70S ribosomal complex. This is Translation initiation factor IF-2 from Parabacteroides distasonis (strain ATCC 8503 / DSM 20701 / CIP 104284 / JCM 5825 / NCTC 11152).